A 185-amino-acid polypeptide reads, in one-letter code: Peptide deformylase (185 aa).

Fe cation is bound by residues C109 and H152. Residue E153 is part of the active site. H156 is a Fe cation binding site.

Belongs to the polypeptide deformylase family. The cofactor is Fe(2+).

The catalysed reaction is N-terminal N-formyl-L-methionyl-[peptide] + H2O = N-terminal L-methionyl-[peptide] + formate. Removes the formyl group from the N-terminal Met of newly synthesized proteins. Requires at least a dipeptide for an efficient rate of reaction. N-terminal L-methionine is a prerequisite for activity but the enzyme has broad specificity at other positions. The sequence is that of Peptide deformylase from Roseiflexus sp. (strain RS-1).